A 228-amino-acid chain; its full sequence is Probable C4-dicarboxylate response regulator DctR (228 aa).

Positions 7–123 constitute a Response regulatory domain; that stretch reads TVLLIEDDPM…RMKQALEQYR (117 aa). Asp-58 carries the 4-aspartylphosphate modification. Residues 180-199 constitute a DNA-binding region (H-T-H motif); it reads AEEVADGVGIARVTARRYLE.

Phosphorylated by DctS.

It is found in the cytoplasm. Member of the two-component regulatory system DctS/DctR. Essential for expression of DctP. The polypeptide is Probable C4-dicarboxylate response regulator DctR (dctR) (Priestia megaterium (Bacillus megaterium)).